Reading from the N-terminus, the 243-residue chain is Large ribosomal subunit protein uL3 (243 aa).

Disordered regions lie at residues 139-164 (VSHRSIGSTGGRQDPGKTFKNKKMPG) and 218-243 (KPGKFKLADGGDKAAAAPEATAGEGA). Position 151 is an N5-methylglutamine (Q151). Residues 218 to 229 (KPGKFKLADGGD) show a composition bias toward basic and acidic residues. Positions 230-243 (KAAAAPEATAGEGA) are enriched in low complexity.

It belongs to the universal ribosomal protein uL3 family. In terms of assembly, part of the 50S ribosomal subunit. Forms a cluster with proteins L14 and L19. Post-translationally, methylated by PrmB.

In terms of biological role, one of the primary rRNA binding proteins, it binds directly near the 3'-end of the 23S rRNA, where it nucleates assembly of the 50S subunit. This chain is Large ribosomal subunit protein uL3, found in Afipia carboxidovorans (strain ATCC 49405 / DSM 1227 / KCTC 32145 / OM5) (Oligotropha carboxidovorans).